A 299-amino-acid chain; its full sequence is Acetylglutamate kinase (299 aa).

Substrate contacts are provided by residues Gly72–Gly73, Arg94, and Asn196.

Belongs to the acetylglutamate kinase family. ArgB subfamily.

Its subcellular location is the cytoplasm. It carries out the reaction N-acetyl-L-glutamate + ATP = N-acetyl-L-glutamyl 5-phosphate + ADP. The protein operates within amino-acid biosynthesis; L-arginine biosynthesis; N(2)-acetyl-L-ornithine from L-glutamate: step 2/4. Catalyzes the ATP-dependent phosphorylation of N-acetyl-L-glutamate. In Burkholderia thailandensis (strain ATCC 700388 / DSM 13276 / CCUG 48851 / CIP 106301 / E264), this protein is Acetylglutamate kinase.